Reading from the N-terminus, the 676-residue chain is Envelope glycoprotein (676 aa).

The signal sequence occupies residues 1 to 32; it reads MGGLSLLQLPRDKFRKSSFFVWVIILFQKAFS. The segment at 33-185 is receptor binding; the sequence is MPLGVVTNST…FAEGVIAFLI (153 aa). Over 33–650 the chain is Extracellular; the sequence is MPLGVVTNST…DDNWWTGWRQ (618 aa). N-linked (GlcNAc...) asparagine; by host glycosylation is present at N40. Cystine bridges form between C53/C609, C108/C135, C121/C147, C511/C556, and C601/C608. N-linked (GlcNAc...) asparagine; by host glycosylation is found at N204, N208, N238, N257, N268, N296, N314, and N366. The mucin-like region stretch occupies residues 305–485; that stretch reads ELSFEALSLN…STSNGLITST (181 aa). Disordered regions lie at residues 337-373 and 404-461; these read RKYSDLVPKNSPGMVPLHIPEGETTLPSQNSTEGRRV and RPSS…LTTP. Composition is skewed to low complexity over residues 405 to 428 and 449 to 461; these read PSSSQIPSSSPTTAPSPEAQTPTT and PGPTTEAPTLTTP. The N-linked (GlcNAc...) asparagine; by host glycan is linked to N463. A fusion peptide region spans residues 524 to 539; the sequence is HNAAGIAWIPYFGPGA. Residues 554–595 are a coiled coil; that stretch reads LVCGLRQLANETTQALQLFLRATTELRTYTILNRKAIDFLLR. The N-linked (GlcNAc...) asparagine; by host glycan is linked to N563. Residues 615 to 634 are a coiled coil; sequence WTKNITDKINQIIHDFIDNP. A glycan (N-linked (GlcNAc...) asparagine; by host) is linked at N618. The chain crosses the membrane as a helical span at residues 651 to 671; that stretch reads WIPAGIGITGIIIAIIALLCV. Residues C670 and C672 are each lipidated (S-palmitoyl cysteine; by host). Residues 672-676 lie on the Cytoplasmic side of the membrane; that stretch reads CKLLC.

The protein belongs to the filoviruses glycoprotein family. Homotrimer; each monomer consists of a GP1 and a GP2 subunit linked by disulfide bonds. The resulting peplomers (GP1,2) protrude from the virus surface as spikes. Interacts with host integrin alpha-V/ITGAV. Interacts with host CLEC10A. Binds also to host CD209 and CLEC4M/DC-SIGN(R). Interacts with host FOLR1. Interacts with BST2; this interaction inhibits the antiviral effect of BST2 and this allows viral release from infected cells. Interacts with host FCN1; this interaction enhances viral entry. Interacts with host TLR4; this interaction induces cell death in T-lymphocytes or proinflammatory cytokines and SOCS1 production in monocytes. As to quaternary structure, interacts with host entry receptor NPC1. In terms of assembly, GP1 and GP2delta are part of GP1,2delta soluble complexes released by ectodomain shedding. In terms of processing, N-glycosylated. Post-translationally, O-glycosylated in the mucin-like region. Palmitoylation of GP2 is not required for its function. In terms of processing, specific enzymatic cleavages in vivo yield mature proteins. The precursor is processed into GP1 and GP2 by host cell furin in the trans Golgi, and maybe by other host proteases, to yield the mature GP1 and GP2 proteins. The cleavage site corresponds to the furin optimal cleavage sequence [KR]-X-[KR]-R. This cleavage does not seem to be required for function. After the internalization of the virus into cell endosomes, GP1 C-terminus is removed by the endosomal proteases cathepsin B, cathepsin L, or both, leaving a 19-kDa N-terminal fragment which is further digested by cathepsin B. Proteolytic processing of GP1,2 by host ADAM17 can remove the transmembrane anchor of GP2 and leads to shedding of complexes consisting in GP1 and truncated GP2 (GP1,2delta).

Its subcellular location is the virion membrane. It localises to the host cell membrane. The protein resides in the secreted. Trimeric GP1,2 complexes form the virion surface spikes and mediate the viral entry processes, with GP1 acting as the receptor-binding subunit and GP2 as the membrane fusion subunit. At later times of infection, down-regulates the expression of various host cell surface molecules that are essential for immune surveillance and cell adhesion. Down-modulates several integrins including ITGA1, ITGA2, ITGA3, ITGA4, ITGA5, ITGA6, ITGAV and ITGB1. This decrease in cell adhesion molecules may lead to cell detachment, contributing to the disruption of blood vessel integrity and hemorrhages developed during infection (cytotoxicity). Interacts with host TLR4 and thereby stimulates the differentiation and activation of monocytes leading to bystander death of T-lymphocytes. Down-regulates as well the function of host natural killer cells. Counteracts the antiviral effect of host BST2/tetherin that restricts release of progeny virions from infected cells. However, cooperates with VP40 and host BST2 to activate canonical NF-kappa-B pathway in a manner dependent on neddylation. Its function is as follows. Functions as a decoy for anti-GP1,2 antibodies thereby contributing to viral immune evasion. Interacts and activates host macrophages and dendritic cells inducing up-regulation of cytokine transcription. This effect is mediated throught activation of host TLR4. Functionally, responsible for binding to the receptor(s) on target cells. Interacts with CD209/DC-SIGN and CLEC4M/DC-SIGNR which act as cofactors for virus entry into dendritic cells (DCs) and endothelial cells. Binding to the macrophage specific lectin CLEC10A also seems to enhance virus infectivity. Interaction with FOLR1/folate receptor alpha may be a cofactor for virus entry in some cell types, although results are contradictory. Members of the Tyro3 receptor tyrosine kinase family also seem to be cell entry factors in filovirus infection. Once attached, the virions are internalized through clathrin-dependent endocytosis and/or macropinocytosis. After internalization of the virus into the endosomes of the host cell, proteolysis of GP1 by two cysteine proteases, CTSB/cathepsin B and CTSL/cathepsin L removes the glycan cap and allows GP1 binding to the host entry receptor NPC1. NPC1-binding, Ca(2+) and acidic pH induce a conformational change of GP2, which unmasks its fusion peptide and permit membranes fusion. In terms of biological role, acts as a class I viral fusion protein. Under the current model, the protein has at least 3 conformational states: pre-fusion native state, pre-hairpin intermediate state, and post-fusion hairpin state. During viral and target cell membrane fusion, the coiled coil regions (heptad repeats) assume a trimer-of-hairpins structure, positioning the fusion peptide in close proximity to the C-terminal region of the ectodomain. The formation of this structure appears to drive apposition and subsequent fusion of viral and target cell membranes. Responsible for penetration of the virus into the cell cytoplasm by mediating the fusion of the membrane of the endocytosed virus particle with the endosomal membrane. Low pH in endosomes induces an irreversible conformational change in GP2, releasing the fusion hydrophobic peptide. The chain is Envelope glycoprotein (GP) from Sudan ebolavirus (strain Human/Uganda/Gulu/2000) (SEBOV).